The sequence spans 550 residues: MATKLIKHGSKAREQMLEGIDILADAVKVTLGPKGRNVLIEQSFGAPKITKDGVTVAKSIELKDKIRNAGAQLLKSAATKAAEVAGDGTTTATVLARALAREGNKLVAAGYNPMDLKRGMDLAVNTVLEEVKKASKKIDSQEEIAQVGTISSNGDKEIGEKIAKAMEEVGKEGVITVEEAKNFSFDVEVVKGMMFDRGYLSPYFVTNSEKMVAELENPYILLFEKKLSNLQPMLPILEAVVQSQRPLLIIAEDVEGEALATLVVNRLRGGLKVAAVKAPGFGDRRKAMMEDIAILTNGELITEDLGMKLENVSLKSLGHAKRVTISKENTVIVDGSGDKKNIEERVLQIKSHIAETTSDYDKEKLQERLAKLSGGVAVLKVGGATEVEVKERKDRVEDALAATRAAVEEGVVAGGGVTLLHASQALKNLKVDNKDQQAGIELVIEALKDPIKQIVENAGENGGVVVGKLLEHKDKNFGFNAQDMQYVDMIKAGIIDPAKVVRTALQDAASVASLIITTETLIVDEPEDKENPMPMRGGMGGMGGMGGMDF.

Residues 30 to 33 (TLGP), Lys-51, 87 to 91 (DGTTT), Gly-415, and Asp-496 contribute to the ATP site.

The protein belongs to the chaperonin (HSP60) family. As to quaternary structure, forms a cylinder of 14 subunits composed of two heptameric rings stacked back-to-back. Interacts with the co-chaperonin GroES.

It is found in the cytoplasm. The catalysed reaction is ATP + H2O + a folded polypeptide = ADP + phosphate + an unfolded polypeptide.. Its function is as follows. Together with its co-chaperonin GroES, plays an essential role in assisting protein folding. The GroEL-GroES system forms a nano-cage that allows encapsulation of the non-native substrate proteins and provides a physical environment optimized to promote and accelerate protein folding. The protein is Chaperonin GroEL of Rickettsia bellii (strain OSU 85-389).